An 85-amino-acid polypeptide reads, in one-letter code: Toxin CsE8 (85 aa).

The first 19 residues, 1–19 (MNSLLMITACLVLFGTVWS), serve as a signal peptide directing secretion. The region spanning 20-83 (EKGYLVHEDT…TWPLIGKLCG (64 aa)) is the LCN-type CS-alpha/beta domain. Disulfide bonds link Cys-31–Cys-82, Cys-35–Cys-58, Cys-44–Cys-63, and Cys-48–Cys-65. Cys-82 bears the Cysteine amide mark.

It belongs to the long (4 C-C) scorpion toxin superfamily. Sodium channel inhibitor family. Beta subfamily. As to expression, expressed by the venom gland.

Its subcellular location is the secreted. Functionally, beta toxins bind voltage-independently at site-4 of sodium channels (Nav) and shift the voltage of activation toward more negative potentials thereby affecting sodium channel activation and promoting spontaneous and repetitive firing. The protein is Toxin CsE8 of Centruroides sculpturatus (Arizona bark scorpion).